Here is a 213-residue protein sequence, read N- to C-terminus: Thiamine-phosphate synthase (213 aa).

4-amino-2-methyl-5-(diphosphooxymethyl)pyrimidine-binding positions include 40–44 and Asn-75; that span reads QFREK. Residues Asp-76 and Asp-95 each contribute to the Mg(2+) site. Position 113 (Ser-113) interacts with 4-amino-2-methyl-5-(diphosphooxymethyl)pyrimidine. 139-141 lines the 2-[(2R,5Z)-2-carboxy-4-methylthiazol-5(2H)-ylidene]ethyl phosphate pocket; it reads TPS. Lys-142 provides a ligand contact to 4-amino-2-methyl-5-(diphosphooxymethyl)pyrimidine. 2-[(2R,5Z)-2-carboxy-4-methylthiazol-5(2H)-ylidene]ethyl phosphate is bound by residues Gly-171 and 191-192; that span reads IS.

Belongs to the thiamine-phosphate synthase family. Requires Mg(2+) as cofactor.

It catalyses the reaction 2-[(2R,5Z)-2-carboxy-4-methylthiazol-5(2H)-ylidene]ethyl phosphate + 4-amino-2-methyl-5-(diphosphooxymethyl)pyrimidine + 2 H(+) = thiamine phosphate + CO2 + diphosphate. The catalysed reaction is 2-(2-carboxy-4-methylthiazol-5-yl)ethyl phosphate + 4-amino-2-methyl-5-(diphosphooxymethyl)pyrimidine + 2 H(+) = thiamine phosphate + CO2 + diphosphate. It carries out the reaction 4-methyl-5-(2-phosphooxyethyl)-thiazole + 4-amino-2-methyl-5-(diphosphooxymethyl)pyrimidine + H(+) = thiamine phosphate + diphosphate. Its pathway is cofactor biosynthesis; thiamine diphosphate biosynthesis; thiamine phosphate from 4-amino-2-methyl-5-diphosphomethylpyrimidine and 4-methyl-5-(2-phosphoethyl)-thiazole: step 1/1. Its function is as follows. Condenses 4-methyl-5-(beta-hydroxyethyl)thiazole monophosphate (THZ-P) and 2-methyl-4-amino-5-hydroxymethyl pyrimidine pyrophosphate (HMP-PP) to form thiamine monophosphate (TMP). This Staphylococcus aureus (strain bovine RF122 / ET3-1) protein is Thiamine-phosphate synthase.